The chain runs to 85 residues: Probable Sec-independent protein translocase protein TatE (85 aa).

The helical transmembrane segment at 1 to 21 threads the bilayer; that stretch reads MEGLSITKLLVVGILIVLLFG. Residues 64–85 are disordered; that stretch reads KTVAETKAASDSQAAASVERKD.

It belongs to the TatA/E family. TatE subfamily.

It is found in the cell inner membrane. Functionally, part of the twin-arginine translocation (Tat) system that transports large folded proteins containing a characteristic twin-arginine motif in their signal peptide across membranes. TatE shares overlapping functions with TatA. This Yersinia pestis protein is Probable Sec-independent protein translocase protein TatE.